The chain runs to 296 residues: ATP synthase gamma chain (296 aa).

This sequence belongs to the ATPase gamma chain family. As to quaternary structure, F-type ATPases have 2 components, CF(1) - the catalytic core - and CF(0) - the membrane proton channel. CF(1) has five subunits: alpha(3), beta(3), gamma(1), delta(1), epsilon(1). CF(0) has three main subunits: a, b and c.

Its subcellular location is the cell membrane. Functionally, produces ATP from ADP in the presence of a proton gradient across the membrane. The gamma chain is believed to be important in regulating ATPase activity and the flow of protons through the CF(0) complex. This is ATP synthase gamma chain from Pseudarthrobacter chlorophenolicus (strain ATCC 700700 / DSM 12829 / CIP 107037 / JCM 12360 / KCTC 9906 / NCIMB 13794 / A6) (Arthrobacter chlorophenolicus).